We begin with the raw amino-acid sequence, 44 residues long: Defensin ARD1 (44 aa).

3 disulfides stabilise this stretch: Cys7–Cys32, Cys18–Cys40, and Cys22–Cys42.

The protein localises to the secreted. Functionally, possesses potent anti-fungal activity. The sequence is that of Defensin ARD1 from Archaeoprepona demophon (One-spotted leafwing butterfly).